A 113-amino-acid chain; its full sequence is Protein translation factor SUI1 homolog (113 aa).

It belongs to the SUI1 family.

In terms of biological role, probably involved in translation. This Salix bakko (Japanese willow) protein is Protein translation factor SUI1 homolog.